The sequence spans 319 residues: Ribosomal RNA small subunit methyltransferase H (319 aa).

Residues 39–41, D59, F83, D104, and Q111 each bind S-adenosyl-L-methionine; that span reads GGH.

The protein belongs to the methyltransferase superfamily. RsmH family.

It localises to the cytoplasm. It catalyses the reaction cytidine(1402) in 16S rRNA + S-adenosyl-L-methionine = N(4)-methylcytidine(1402) in 16S rRNA + S-adenosyl-L-homocysteine + H(+). Its function is as follows. Specifically methylates the N4 position of cytidine in position 1402 (C1402) of 16S rRNA. The chain is Ribosomal RNA small subunit methyltransferase H from Ralstonia pickettii (strain 12J).